A 182-amino-acid polypeptide reads, in one-letter code: Dynactin subunit 5 (182 aa).

At Met1 the chain carries N-acetylmethionine.

Belongs to the dynactin subunits 5/6 family. Dynactin subunit 5 subfamily. In terms of assembly, subunit of dynactin, a multiprotein complex part of a tripartite complex with dynein and a adapter, such as BICDL1, BICD2 or HOOK3. The dynactin complex is built around ACTR1A/ACTB filament and consists of an actin-related filament composed of a shoulder domain, a pointed end and a barbed end. Its length is defined by its flexible shoulder domain. The soulder is composed of 2 DCTN1 subunits, 4 DCTN2 and 2 DCTN3. The 4 DCNT2 (via N-terminus) bind the ACTR1A filament and act as molecular rulers to determine the length. The pointed end is important for binding dynein-dynactin cargo adapters. Consists of 4 subunits: ACTR10, DCNT4, DCTN5 and DCTN6. Within the complex DCTN6 forms a heterodimer with DCTN5. The barbed end is composed of a CAPZA1:CAPZB heterodimers, which binds ACTR1A/ACTB filament and dynactin and stabilizes dynactin. Interacts with N4BP2L1.

It is found in the cytoplasm. The protein resides in the cytoskeleton. Its subcellular location is the chromosome. The protein localises to the centromere. It localises to the kinetochore. Part of the dynactin complex that activates the molecular motor dynein for ultra-processive transport along microtubules. The polypeptide is Dynactin subunit 5 (Homo sapiens (Human)).